The primary structure comprises 434 residues: [Arg8]-vasotocin receptor (434 aa).

At 1–27 the chain is on the extracellular side; the sequence is MGRIANQTTASNDTDPFGRNEEVAKME. Residues Asn6 and Asn12 are each glycosylated (N-linked (GlcNAc...) asparagine). Residues 28-48 form a helical membrane-spanning segment; it reads ITVLSVTFFVAVIGNLSVLLA. Topologically, residues 49 to 67 are cytoplasmic; the sequence is MHNTKKKSSRMHLFIKHLS. A helical transmembrane segment spans residues 68 to 88; sequence LADMVVAFFQVLPQLCWEITF. Topologically, residues 89–98 are extracellular; the sequence is RFYGPDFLCR. An intrachain disulfide couples Cys97 to Cys176. Residues 99-119 traverse the membrane as a helical segment; that stretch reads IVKHLQVLGMFASTYMMVMMT. At 120 to 141 the chain is on the cytoplasmic side; that stretch reads LDRYIAICHPLKTLQQPTQRAY. A helical transmembrane segment spans residues 142–162; sequence IMIGSTWLCSLLLSTPQYFIF. The Extracellular segment spans residues 163–191; that stretch reads SLSEIQNGSYVYDCWGHFIEPWGIRAYIT. A helical membrane pass occupies residues 192 to 212; sequence WITVGIFLIPVIILMICYGFI. At 213–257 the chain is on the cytoplasmic side; the sequence is CHSIWKNIKCKTMRGTRNTKDGMIGKVSVSSVTIISRAKLRTVKM. The helical transmembrane segment at 258–278 threads the bilayer; that stretch reads TLVIVLAYIVCWAPFFIVQMW. Residues 279–295 lie on the Extracellular side of the membrane; the sequence is SVWDENFSWDDSENAAV. The chain crosses the membrane as a helical span at residues 296-316; sequence TLSALLASLNSCCNPWIYMLF. Residues 317 to 434 lie on the Cytoplasmic side of the membrane; sequence SGHLLYDFLR…KSSQCMSKES (118 aa).

Belongs to the G-protein coupled receptor 1 family. Vasopressin/oxytocin receptor subfamily. As to expression, expressed in pituitary, liver, gills, swim bladder and lateral line.

The protein localises to the cell membrane. Binds to vasotocin. Produces an induction of membrane chloride currents indicating that it is coupled to the inositol phosphate/calcium pathway. The protein is [Arg8]-vasotocin receptor of Catostomus commersonii (White sucker).